Consider the following 2429-residue polypeptide: Highly reducing polyketide synthase acrA (2429 aa).

In terms of domain architecture, Ketosynthase family 3 (KS3) spans 4–436; that stretch reads PEPIAIVGMG…GTNAHAIIES (433 aa). Catalysis depends on for beta-ketoacyl synthase activity residues cysteine 177, histidine 314, and histidine 356. Residues 541–861 form a malonyl-CoA:ACP transacylase (MAT) domain region; the sequence is VFTGQGAQWP…PYSGTLSRGQ (321 aa). Residues 931–1068 are N-terminal hotdog fold; that stretch reads HPLLGVRSTE…GTVRVVLGPA (138 aa). A dehydratase (DH) domain region spans residues 931–1229; that stretch reads HPLLGVRSTE…RCSSLTPPGP (299 aa). The PKS/mFAS DH domain occupies 931–1230; it reads HPLLGVRSTE…CSSLTPPGPR (300 aa). Histidine 963 (proton acceptor; for dehydratase activity) is an active-site residue. Positions 1082 to 1230 are C-terminal hotdog fold; it reads VFHEVKTERF…CSSLTPPGPR (149 aa). The Proton donor; for dehydratase activity role is filled by aspartate 1141. Positions 1388 to 1577 are methyltransferase (MT) domain; that stretch reads NGYMGRVAGQ…VNDFVDESKY (190 aa). The ketoreductase (KR) domain stretch occupies residues 2065–2235; sequence TYLLVGCTGG…ARGLAASVFH (171 aa). The Carrier domain occupies 2351 to 2428; sequence EVDGVIQEAF…ELCREAASEV (78 aa). The residue at position 2388 (serine 2388) is an O-(pantetheine 4'-phosphoryl)serine.

The protein operates within secondary metabolite biosynthesis. In terms of biological role, highly reducing polyketide synthase; part of the cluster that mediates the biosynthesis of acurin A, a highly reduced polyketide coupled to a serine via a peptide bond. The activities of the highly reducing polyketide synthase acrA and the nonribosomal peptide synthetase acrB are collectively responsible for the synthesis of the acurin A core structure with a heptaketide backbone produced by acrA covalently fused to a L-serine by acrB. After the formation of the PK-NRP hybrid product, it is detached from acrB by reductive release to set up the formation of the lactam ring by aldol condensation. The hydrolyase acrC then catalyzes water loss to generate a double bond in the ring. This double bond is probably reduced, which is followed by three oxidations at C-22 to generate the carboxylic acid moiety, involving probably the FAD-binding monooxygenase acrE and the cytochrome P450 monooxygenases acrD and acrF. Finally, a last methylation step performed by the O-methyltransferase acrG leads to the production of acurin A. This Aspergillus aculeatus (strain ATCC 16872 / CBS 172.66 / WB 5094) protein is Highly reducing polyketide synthase acrA.